Consider the following 297-residue polypeptide: Phosphoribosylaminoimidazole-succinocarboxamide synthase (297 aa).

It belongs to the SAICAR synthetase family.

It catalyses the reaction 5-amino-1-(5-phospho-D-ribosyl)imidazole-4-carboxylate + L-aspartate + ATP = (2S)-2-[5-amino-1-(5-phospho-beta-D-ribosyl)imidazole-4-carboxamido]succinate + ADP + phosphate + 2 H(+). It functions in the pathway purine metabolism; IMP biosynthesis via de novo pathway; 5-amino-1-(5-phospho-D-ribosyl)imidazole-4-carboxamide from 5-amino-1-(5-phospho-D-ribosyl)imidazole-4-carboxylate: step 1/2. The sequence is that of Phosphoribosylaminoimidazole-succinocarboxamide synthase (purC) from Mycobacterium leprae (strain TN).